A 208-amino-acid chain; its full sequence is Inner membrane-spanning protein YciB (208 aa).

5 consecutive transmembrane segments (helical) span residues 49 to 69 (APVL…ILWL), 78 to 98 (TMLW…IYFH), 105 to 125 (WKPT…ELVF), 150 to 170 (FSWV…AFNF), and 178 to 198 (FKLF…AFFL).

The protein belongs to the YciB family.

The protein localises to the cell inner membrane. Its function is as follows. Plays a role in cell envelope biogenesis, maintenance of cell envelope integrity and membrane homeostasis. This is Inner membrane-spanning protein YciB from Polaromonas naphthalenivorans (strain CJ2).